The chain runs to 73 residues: Beta-defensin 50 (73 aa).

A signal peptide spans 1 to 23 (MKTLHLLLLISGLLSVFVKGVGS). Disulfide bonds link cysteine 34–cysteine 63 and cysteine 46–cysteine 64.

This sequence belongs to the beta-defensin family.

Its subcellular location is the secreted. Has bactericidal activity. This is Beta-defensin 50 (Defb50) from Rattus norvegicus (Rat).